Reading from the N-terminus, the 299-residue chain is Tyrosine recombinase XerC (299 aa).

The region spanning 1–85 is the Core-binding (CB) domain; it reads MDQHLDAYCM…AVRGFYKYLN (85 aa). One can recognise a Tyr recombinase domain in the interval 106 to 285; it reads RLPKTLDTDR…DFQHLATVYD (180 aa). Active-site residues include Arg-146, Lys-170, His-237, Arg-240, and His-263. The active-site O-(3'-phospho-DNA)-tyrosine intermediate is the Tyr-272.

The protein belongs to the 'phage' integrase family. XerC subfamily. As to quaternary structure, forms a cyclic heterotetrameric complex composed of two molecules of XerC and two molecules of XerD.

The protein resides in the cytoplasm. Site-specific tyrosine recombinase, which acts by catalyzing the cutting and rejoining of the recombining DNA molecules. The XerC-XerD complex is essential to convert dimers of the bacterial chromosome into monomers to permit their segregation at cell division. It also contributes to the segregational stability of plasmids. The protein is Tyrosine recombinase XerC of Pseudomonas syringae pv. syringae (strain B728a).